A 109-amino-acid chain; its full sequence is Hainantoxin-XVIII (109 aa).

The signal sequence occupies residues 1–18 (MKLSIIIIATSLVIAVVA). A propeptide spanning residues 19 to 46 (FPSKDSKAIENDKTEQRMEIVVQETARA) is cleaved from the precursor. Cystine bridges form between C47–C62, C55–C68, C59–C108, and C61–C81.

Belongs to the neurotoxin 25 family. F7 subfamily. As to expression, expressed by the venom gland.

The protein resides in the secreted. Its function is as follows. Putative ion channel inhibitor. This chain is Hainantoxin-XVIII, found in Cyriopagopus hainanus (Chinese bird spider).